We begin with the raw amino-acid sequence, 212 residues long: External core antigen (212 aa).

The N-terminal stretch at 1 to 19 (MQLFHLCLIIFCSCPTVQA) is a signal peptide. The tract at residues 25–27 (GWL) is HBEAG. The tract at residues 165–212 (NAPILSTLPETTVVRQRGRAPRRRTPSPRRRRSQSPRRRRSQSPASQC) is disordered. The span at 180-205 (QRGRAPRRRTPSPRRRRSQSPRRRRS) shows a compositional bias: basic residues. The stretch at 184–190 (APRRRTP) is one 1; half-length repeat. Residues 184–206 (APRRRTPSPRRRRSQSPRRRRSQ) form a 3 X 8 AA repeats of S-P-R-R-R-R-S-Q region. Positions 184–212 (APRRRTPSPRRRRSQSPRRRRSQSPASQC) are excised as a propeptide. A run of 2 repeats spans residues 191–198 (SPRRRRSQ) and 199–206 (SPRRRRSQ).

This sequence belongs to the orthohepadnavirus precore antigen family. Homodimerizes. Post-translationally, phosphorylated. Cleaved by host furin.

Its subcellular location is the secreted. It is found in the host nucleus. Its function is as follows. May regulate immune response to the intracellular capsid in acting as a T-cell tolerogen, by having an immunoregulatory effect which prevents destruction of infected cells by cytotoxic T-cells. This immune regulation may predispose to chronicity during perinatal infections and prevent severe liver injury during adult infections. The polypeptide is External core antigen (Hepatitis B virus genotype H subtype adw4 (isolate Nicaragua/2928Nic/1997) (HBV-H)).